Here is a 373-residue protein sequence, read N- to C-terminus: Alanine racemase (373 aa).

K37 functions as the Proton acceptor; specific for D-alanine in the catalytic mechanism. K37 bears the N6-(pyridoxal phosphate)lysine mark. Residue R135 coordinates substrate. Y266 functions as the Proton acceptor; specific for L-alanine in the catalytic mechanism. M313 is a substrate binding site.

This sequence belongs to the alanine racemase family. It depends on pyridoxal 5'-phosphate as a cofactor.

It carries out the reaction L-alanine = D-alanine. Its pathway is amino-acid biosynthesis; D-alanine biosynthesis; D-alanine from L-alanine: step 1/1. Its function is as follows. Catalyzes the interconversion of L-alanine and D-alanine. This organism is able to use both L- and D-alanine as a nitrogen source. May also prevent D-alanine from interfering with the use of L-alanine. The polypeptide is Alanine racemase (alr) (Methanococcus maripaludis (strain DSM 14266 / JCM 13030 / NBRC 101832 / S2 / LL)).